Consider the following 90-residue polypeptide: Small ribosomal subunit protein bS16 (90 aa).

Belongs to the bacterial ribosomal protein bS16 family.

The sequence is that of Small ribosomal subunit protein bS16 from Listeria monocytogenes serotype 4b (strain F2365).